Consider the following 393-residue polypeptide: Probable alpha-1,6-mannosyltransferase MNN10 (393 aa).

The Cytoplasmic segment spans residues 1 to 52 (MSSVPYNSQLPISNHLEYDEDEKKSRGSKLGLKYKMIYWRKTLCSSLARWRK). Residues 53 to 73 (LILLISLALFLFIWISDSTIS) form a helical; Signal-anchor for type II membrane protein membrane-spanning segment. The Lumenal segment spans residues 74–393 (RNPSTTSFQG…RKWYTRFFFP (320 aa)). Residues 77 to 97 (STTSFQGQNSNDNKLSNTGSS) form a disordered region.

This sequence belongs to the glycosyltransferase 34 family. As to quaternary structure, component of the M-Pol II complex composed of ANP1, MNN9, MNN10, MNN11 and HOC1.

It is found in the endoplasmic reticulum membrane. Its subcellular location is the golgi apparatus. It localises to the cis-Golgi network membrane. Required for polarized growth and efficient budding. Its function is as follows. The M-Pol II complex possesses alpha-1,6-mannosyltransferase activity and is probably involved in the elongation of the mannan backbone of N-linked glycans on cell wall and periplasmic proteins. In Saccharomyces cerevisiae (strain ATCC 204508 / S288c) (Baker's yeast), this protein is Probable alpha-1,6-mannosyltransferase MNN10 (MNN10).